The following is a 684-amino-acid chain: Phenoloxidase 2 (684 aa).

The propeptide occupies 1 to 50 (MADKKNLLLLFDHPTEPVFMDKGKRVTVFDVPDSFLTDRYRPISNEVQSR). Residues H208, H212, and H238 each contribute to the Cu cation site. The active-site Proton acceptor is the E350. Positions 365, 369, and 405 each coordinate Cu cation. Residues N448 and N492 are each glycosylated (N-linked (GlcNAc...) asparagine). Disulfide bonds link C581-C623 and C583-C630. 2 N-linked (GlcNAc...) asparagine glycosylation sites follow: N665 and N677.

It belongs to the tyrosinase family. Cu(2+) is required as a cofactor. Upon activation, a trypsin type protease cleaves prophenol oxidase to yield the active enzyme.

Its subcellular location is the secreted. The enzyme catalyses 2 L-dopa + O2 = 2 L-dopaquinone + 2 H2O. It carries out the reaction L-tyrosine + O2 = L-dopaquinone + H2O. Its function is as follows. This is a copper-containing oxidase that functions in the formation of pigments such as melanins and other polyphenolic compounds. Catalyzes the rate-limiting conversions of tyrosine to DOPA, DOPA to DOPA-quinone and possibly 5,6 dihydroxyindole to indole-5'6 quinonee. The chain is Phenoloxidase 2 (PPO2) from Drosophila melanogaster (Fruit fly).